A 510-amino-acid chain; its full sequence is Pantetheinase (510 aa).

The N-terminal stretch at 1–22 (MIMSQLLNYVAVLFFCVSRASS) is a signal peptide. The CN hydrolase domain occupies 31-307 (YEHAVILPNA…GKLLLAQLDS (277 aa)). A glycan (N-linked (GlcNAc...) asparagine) is linked at asparagine 39. Glutamate 80 serves as the catalytic Proton acceptor. Residues asparagine 87 and asparagine 147 are each glycosylated (N-linked (GlcNAc...) asparagine). The Proton donor role is filled by lysine 179. N-linked (GlcNAc...) asparagine glycosylation is present at asparagine 201. The active-site Nucleophile is the cysteine 212. N-linked (GlcNAc...) asparagine glycosylation is found at asparagine 316 and asparagine 354. Aspartate 492 carries GPI-anchor amidated aspartate lipidation. Positions 493 to 510 (LTTQALRLNPKTDAWKSK) are cleaved as a propeptide — removed in mature form. O-linked (GalNAc...) threonine glycosylation occurs at threonine 504.

Belongs to the carbon-nitrogen hydrolase superfamily. BTD/VNN family. In terms of assembly, monomer.

It is found in the cell membrane. It carries out the reaction (R)-pantetheine + H2O = cysteamine + (R)-pantothenate. Its function is as follows. Amidohydrolase that hydrolyzes specifically one of the carboamide linkages in D-pantetheine thus recycling pantothenic acid (vitamin B5) and releasing cysteamine. The protein is Pantetheinase (VNN1) of Bos taurus (Bovine).